A 226-amino-acid chain; its full sequence is Thioredoxin domain-containing protein 9 (226 aa).

A Thioredoxin domain is found at 75 to 180; it reads EIGSERDFFQ…TTETLEWRLG (106 aa). Phosphoserine occurs at positions 188, 221, and 223.

In terms of assembly, forms ternary complexes with the chaperonin TCP1 complex, spanning the cylindrical chaperonin cavity and contacting at least 2 subunits. Expressed in testis, liver, heart, kidney, brain, spleen and lung.

The protein resides in the cytoplasm. Its subcellular location is the nucleus. It localises to the cytoskeleton. It is found in the microtubule organizing center. The protein localises to the centrosome. The protein resides in the midbody. Its function is as follows. Significantly diminishes the chaperonin TCP1 complex ATPase activity, thus negatively impacts protein folding, including that of actin or tubulin. The polypeptide is Thioredoxin domain-containing protein 9 (Txndc9) (Mus musculus (Mouse)).